Here is a 742-residue protein sequence, read N- to C-terminus: Phosphoribosylformylglycinamidine synthase subunit PurL (742 aa).

His-53 is an active-site residue. The ATP site is built by Tyr-56 and Lys-95. Glu-97 provides a ligand contact to Mg(2+). Residues 98 to 101 (SHNH) and Arg-120 contribute to the substrate site. The active-site Proton acceptor is the His-99. Asp-121 contacts Mg(2+). Gln-244 provides a ligand contact to substrate. Asp-274 is a binding site for Mg(2+). Position 318-320 (318-320 (ESQ)) interacts with substrate. Asp-501 and Gly-538 together coordinate ATP. Asn-539 serves as a coordination point for Mg(2+). Ser-541 contributes to the substrate binding site.

This sequence belongs to the FGAMS family. Monomer. Part of the FGAM synthase complex composed of 1 PurL, 1 PurQ and 2 PurS subunits.

The protein localises to the cytoplasm. The catalysed reaction is N(2)-formyl-N(1)-(5-phospho-beta-D-ribosyl)glycinamide + L-glutamine + ATP + H2O = 2-formamido-N(1)-(5-O-phospho-beta-D-ribosyl)acetamidine + L-glutamate + ADP + phosphate + H(+). The protein operates within purine metabolism; IMP biosynthesis via de novo pathway; 5-amino-1-(5-phospho-D-ribosyl)imidazole from N(2)-formyl-N(1)-(5-phospho-D-ribosyl)glycinamide: step 1/2. Its function is as follows. Part of the phosphoribosylformylglycinamidine synthase complex involved in the purines biosynthetic pathway. Catalyzes the ATP-dependent conversion of formylglycinamide ribonucleotide (FGAR) and glutamine to yield formylglycinamidine ribonucleotide (FGAM) and glutamate. The FGAM synthase complex is composed of three subunits. PurQ produces an ammonia molecule by converting glutamine to glutamate. PurL transfers the ammonia molecule to FGAR to form FGAM in an ATP-dependent manner. PurS interacts with PurQ and PurL and is thought to assist in the transfer of the ammonia molecule from PurQ to PurL. This Limosilactobacillus reuteri (strain DSM 20016) (Lactobacillus reuteri) protein is Phosphoribosylformylglycinamidine synthase subunit PurL.